The following is a 561-amino-acid chain: Trehalose-6-phosphate hydrolase (561 aa).

Aspartate 203 acts as the Nucleophile in catalysis. Glutamate 254 acts as the Proton donor in catalysis.

This sequence belongs to the glycosyl hydrolase 13 family.

The protein resides in the cytoplasm. It carries out the reaction alpha,alpha-trehalose 6-phosphate + H2O = D-glucose 6-phosphate + D-glucose. Its activity is regulated as follows. Activity is stimulated by high salt concentrations with different efficiencies depending on the kind of salt. In vitro, inhibited by glucose. In terms of biological role, hydrolyzes trehalose-6-phosphate to glucose and glucose 6-phosphate. Can also very effectively hydrolyze p-nitrophenyl-alpha-D-glucopyranoside, but not lactose, maltose, sucrose or sucrose-6-phosphate. Trehalose is also hydrolyzed, but to a much smaller extent than trehalose-6-phosphate. This Bacillus subtilis (strain 168) protein is Trehalose-6-phosphate hydrolase.